The primary structure comprises 755 residues: Photosystem I P700 chlorophyll a apoprotein A1 (755 aa).

8 helical membrane-spanning segments follow: residues isoleucine 72–alanine 95, leucine 158–histidine 181, leucine 197–isoleucine 221, glutamine 297–tyrosine 315, tryptophan 352–tyrosine 375, isoleucine 391–valine 417, alanine 439–histidine 461, and phenylalanine 536–leucine 554. Cysteine 578 and cysteine 587 together coordinate [4Fe-4S] cluster. The next 2 helical transmembrane spans lie at histidine 594–tryptophan 615 and leucine 669–phenylalanine 691. Histidine 680 provides a ligand contact to chlorophyll a'. 2 residues coordinate chlorophyll a: methionine 688 and tyrosine 696. Tryptophan 697 serves as a coordination point for phylloquinone. A helical transmembrane segment spans residues alanine 729–alanine 749.

It belongs to the PsaA/PsaB family. The PsaA/B heterodimer binds the P700 chlorophyll special pair and subsequent electron acceptors. PSI consists of a core antenna complex that captures photons, and an electron transfer chain that converts photonic excitation into a charge separation. The cyanobacterial PSI reaction center is composed of one copy each of PsaA,B,C,D,E,F,I,J,K,L,M and X, and forms trimeric complexes. The cofactor is PSI electron transfer chain: 5 chlorophyll a, 1 chlorophyll a', 2 phylloquinones and 3 4Fe-4S clusters. PSI core antenna: 90 chlorophyll a, 22 carotenoids, 3 phospholipids and 1 galactolipid. P700 is a chlorophyll a/chlorophyll a' dimer, A0 is one or more chlorophyll a, A1 is one or both phylloquinones and FX is a shared 4Fe-4S iron-sulfur center..

It is found in the cellular thylakoid membrane. The enzyme catalyses reduced [plastocyanin] + hnu + oxidized [2Fe-2S]-[ferredoxin] = oxidized [plastocyanin] + reduced [2Fe-2S]-[ferredoxin]. In terms of biological role, psaA and PsaB bind P700, the primary electron donor of photosystem I (PSI), as well as the electron acceptors A0, A1 and FX. PSI is a plastocyanin/cytochrome c6-ferredoxin oxidoreductase, converting photonic excitation into a charge separation, which transfers an electron from the donor P700 chlorophyll pair to the spectroscopically characterized acceptors A0, A1, FX, FA and FB in turn. Oxidized P700 is reduced on the lumenal side of the thylakoid membrane by plastocyanin or cytochrome c6. The polypeptide is Photosystem I P700 chlorophyll a apoprotein A1 (Synechococcus sp. (strain JA-2-3B'a(2-13)) (Cyanobacteria bacterium Yellowstone B-Prime)).